We begin with the raw amino-acid sequence, 285 residues long: Small ribosomal subunit protein uS5x (285 aa).

Basic and acidic residues predominate over residues Met-1–Phe-19. The interval Met-1–Glu-51 is disordered. Over residues Arg-35–Gly-46 the composition is skewed to basic residues. Residues Leu-96–Val-159 form the S5 DRBM domain.

It belongs to the universal ribosomal protein uS5 family. In terms of assembly, interacts with MBD6.

Its function is as follows. Component of the ribosome, a large ribonucleoprotein complex responsible for the synthesis of proteins in the cell. The small ribosomal subunit (SSU) binds messenger RNAs (mRNAs) and translates the encoded message by selecting cognate aminoacyl-transfer RNA (tRNA) molecules. The large subunit (LSU) contains the ribosomal catalytic site termed the peptidyl transferase center (PTC), which catalyzes the formation of peptide bonds, thereby polymerizing the amino acids delivered by tRNAs into a polypeptide chain. The nascent polypeptides leave the ribosome through a tunnel in the LSU and interact with protein factors that function in enzymatic processing, targeting, and the membrane insertion of nascent chains at the exit of the ribosomal tunnel. Plays a role in the assembly and function of the 40S ribosomal subunit. Mutations in this protein affects the control of translational fidelity. Involved in nucleolar processing of pre-18S ribosomal RNA and ribosome assembly. Also involved in RNA-directed DNA methylation (RdDM). This is Small ribosomal subunit protein uS5x from Arabidopsis thaliana (Mouse-ear cress).